The sequence spans 644 residues: Exoribonuclease 2 (644 aa).

The RNB domain maps to 189–516 (REDLTALDFV…NHRLLKAVIK (328 aa)). One can recognise an S1 motif domain in the interval 561–643 (DTRFAAEIVD…ETRSIIARPV (83 aa)).

The protein belongs to the RNR ribonuclease family. RNase II subfamily.

The protein localises to the cytoplasm. It carries out the reaction Exonucleolytic cleavage in the 3'- to 5'-direction to yield nucleoside 5'-phosphates.. Involved in mRNA degradation. Hydrolyzes single-stranded polyribonucleotides processively in the 3' to 5' direction. This is Exoribonuclease 2 from Escherichia coli (strain SMS-3-5 / SECEC).